A 434-amino-acid polypeptide reads, in one-letter code: UDP-N-acetylmuramate--L-alanine ligase (434 aa).

Residue 108 to 114 (GSHGKTT) coordinates ATP.

It belongs to the MurCDEF family.

The protein localises to the cytoplasm. It carries out the reaction UDP-N-acetyl-alpha-D-muramate + L-alanine + ATP = UDP-N-acetyl-alpha-D-muramoyl-L-alanine + ADP + phosphate + H(+). The protein operates within cell wall biogenesis; peptidoglycan biosynthesis. In terms of biological role, cell wall formation. In Geobacillus kaustophilus (strain HTA426), this protein is UDP-N-acetylmuramate--L-alanine ligase.